The primary structure comprises 465 residues: ATP synthase subunit beta (465 aa).

ATP is bound at residue 154 to 161; sequence GGAGVGKT.

It belongs to the ATPase alpha/beta chains family. In terms of assembly, F-type ATPases have 2 components, CF(1) - the catalytic core - and CF(0) - the membrane proton channel. CF(1) has five subunits: alpha(3), beta(3), gamma(1), delta(1), epsilon(1). CF(0) has three main subunits: a(1), b(2) and c(9-12). The alpha and beta chains form an alternating ring which encloses part of the gamma chain. CF(1) is attached to CF(0) by a central stalk formed by the gamma and epsilon chains, while a peripheral stalk is formed by the delta and b chains.

Its subcellular location is the cell inner membrane. It carries out the reaction ATP + H2O + 4 H(+)(in) = ADP + phosphate + 5 H(+)(out). Its function is as follows. Produces ATP from ADP in the presence of a proton gradient across the membrane. The catalytic sites are hosted primarily by the beta subunits. The polypeptide is ATP synthase subunit beta (Methylobacillus flagellatus (strain ATCC 51484 / DSM 6875 / VKM B-1610 / KT)).